Reading from the N-terminus, the 176-residue chain is Nucleoside triphosphate/diphosphate phosphatase (176 aa).

Catalysis depends on Arg-23, which acts as the Proton donor. 6 residues coordinate Mg(2+): Asn-87, Asp-103, Asp-105, Asp-107, Asp-120, and Glu-123.

Belongs to the Ntdp family. Mg(2+) serves as cofactor.

It catalyses the reaction a ribonucleoside 5'-triphosphate + H2O = a ribonucleoside 5'-diphosphate + phosphate + H(+). It carries out the reaction a ribonucleoside 5'-diphosphate + H2O = a ribonucleoside 5'-phosphate + phosphate + H(+). Functionally, has nucleoside phosphatase activity towards nucleoside triphosphates and nucleoside diphosphates. The polypeptide is Nucleoside triphosphate/diphosphate phosphatase (Bacillus anthracis (strain A0248)).